A 216-amino-acid chain; its full sequence is Twisted gastrulation protein homolog 1-A (216 aa).

Positions 1–25 (MKPSFLHIPAAALLLCSLWILPIYC) are cleaved as a signal peptide. N-linked (GlcNAc...) asparagine glycosylation is found at Asn-52, Asn-81, and Asn-145.

It belongs to the twisted gastrulation protein family. As to quaternary structure, binds directly to bmp2, bmp4 and bmp7 and can form a ternary complex with bmps and chordin, thus preventing the binding of bmps to their cell surface receptors. Posterior defects are induced by overexpression. This may arise through alteration of bmp4 or chrd function in the developing tailbud region.

It localises to the secreted. In terms of biological role, involved in dorsal-ventral patterning, permitting peak BMP signaling by antagonizing the residual anti-BMP activity of the cleavage products of chrd. Functions to promote the formation of ventral mesoderm by increasing the activity of bmp7 and other BMPS. Seems to antagonize BMP signaling by forming ternary complexes with chrd and BMPs, thereby preventing BMPs from binding to their receptors. In addition to the anti-BMP function, also has pro-BMP activity, partly mediated by cleavage and degradation of chrd, which releases BMPs from ternary complexes. May be an important modulator of BMP-regulated cartilage development and chondrocyte differentiation. The polypeptide is Twisted gastrulation protein homolog 1-A (twsg1-a) (Xenopus laevis (African clawed frog)).